We begin with the raw amino-acid sequence, 348 residues long: Ferredoxin--NADP reductase (348 aa).

FAD is bound by residues threonine 25, glutamate 44, glutamine 52, tyrosine 57, valine 97, phenylalanine 132, aspartate 298, and serine 339.

The protein belongs to the ferredoxin--NADP reductase type 2 family. In terms of assembly, homodimer. FAD serves as cofactor.

It carries out the reaction 2 reduced [2Fe-2S]-[ferredoxin] + NADP(+) + H(+) = 2 oxidized [2Fe-2S]-[ferredoxin] + NADPH. This is Ferredoxin--NADP reductase from Chlorobium phaeobacteroides (strain BS1).